We begin with the raw amino-acid sequence, 379 residues long: Lipid-A-disaccharide synthase (379 aa).

Belongs to the LpxB family.

The catalysed reaction is a lipid X + a UDP-2-N,3-O-bis[(3R)-3-hydroxyacyl]-alpha-D-glucosamine = a lipid A disaccharide + UDP + H(+). It participates in bacterial outer membrane biogenesis; LPS lipid A biosynthesis. Functionally, condensation of UDP-2,3-diacylglucosamine and 2,3-diacylglucosamine-1-phosphate to form lipid A disaccharide, a precursor of lipid A, a phosphorylated glycolipid that anchors the lipopolysaccharide to the outer membrane of the cell. The polypeptide is Lipid-A-disaccharide synthase (Vibrio campbellii (strain ATCC BAA-1116)).